Reading from the N-terminus, the 176-residue chain is CASP-like protein 5A1 (176 aa).

At 1-35 the chain is on the cytoplasmic side; the sequence is MNPSHPAVHPVEAPPTDVHHAPRVRMKDYQGMPGT. A helical transmembrane segment spans residues 36-56; that stretch reads LGGLALRLGQFCFAVVAFSIM. Over 57–67 the chain is Extracellular; the sequence is LSTDDFSTVTA. The helical transmembrane segment at 68 to 88 threads the bilayer; it reads FCYLVAATVLQCLWSLALAVI. Residues 89 to 102 are Cytoplasmic-facing; it reads DGYALLVKRSLRNS. A helical transmembrane segment spans residues 103–123; that stretch reads LVVSLFVVGDGVTATLTFAAA. Over 124-152 the chain is Extracellular; sequence CASAGITVLIGNDLRECDQNHCGKYETAT. A helical transmembrane segment spans residues 153-173; sequence AMAFLSWFMVSPSFLLTFWLL. The Cytoplasmic portion of the chain corresponds to 174-176; it reads ASR.

The protein belongs to the Casparian strip membrane proteins (CASP) family. Homodimer and heterodimers.

The protein resides in the cell membrane. The chain is CASP-like protein 5A1 from Ginkgo biloba (Ginkgo).